The following is a 123-amino-acid chain: Protein Wnt-7a (123 aa).

A lipid anchor (O-palmitoleoyl serine; by PORCN) is attached at S1. Residues 33–61 (VEPVRASRNKRPTFLKIKKPLSYLKPMDT) form a disordered linker region. An intrachain disulfide couples C89 to C104. N90 carries an N-linked (GlcNAc...) asparagine glycan.

This sequence belongs to the Wnt family. Palmitoleoylation is required for efficient binding to frizzled receptors. Depalmitoleoylation leads to Wnt signaling pathway inhibition.

It is found in the secreted. Its subcellular location is the extracellular space. The protein localises to the extracellular matrix. Its function is as follows. Ligand for members of the frizzled family of seven transmembrane receptors that functions in the canonical Wnt/beta-catenin signaling pathway. Plays an important role in embryonic development, including dorsal versus ventral patterning during limb development, skeleton development and urogenital tract development. Required for central nervous system (CNS) angiogenesis and blood-brain barrier regulation. This Plethodon jordani (Red-cheeked salamander) protein is Protein Wnt-7a (WNT-7A).